The sequence spans 82 residues: Toxin TdNa6 (82 aa).

An N-terminal signal peptide occupies residues 1-20 (MKGMIMLISCLMLIEVVVGG). One can recognise an LCN-type CS-alpha/beta domain in the interval 21 to 82 (KEGYLLDRSN…KMWHLKTNKC (62 aa)). 4 disulfides stabilise this stretch: C32–C82, C36–C58, C44–C63, and C48–C65.

The protein belongs to the long (4 C-C) scorpion toxin superfamily. Sodium channel inhibitor family. Beta subfamily. Expressed by the venom gland.

Its subcellular location is the secreted. In terms of biological role, beta toxins bind voltage-independently at site-4 of sodium channels (Nav) and shift the voltage of activation toward more negative potentials thereby affecting sodium channel activation and promoting spontaneous and repetitive firing. Is toxic to arthropods. The polypeptide is Toxin TdNa6 (Tityus discrepans (Venezuelan scorpion)).